The chain runs to 739 residues: Adenosylcobalamin-dependent ribonucleoside-triphosphate reductase (739 aa).

The cysteines at positions 119 and 419 are disulfide-linked. Residues S147–M158 are effector region-1. Residues A168–V313 form an effector region-2 region. Active-site residues include C408 and E410. An adenosylcobalamin-binding-1 region spans residues F565–V626. The tract at residues L685–E724 is adenosylcobalamin-binding-2.

This sequence belongs to the class II ribonucleoside-triphosphate reductase family. Monomer. The cofactor is adenosylcob(III)alamin.

It catalyses the reaction a 2'-deoxyribonucleoside 5'-triphosphate + [thioredoxin]-disulfide + H2O = a ribonucleoside 5'-triphosphate + [thioredoxin]-dithiol. With respect to regulation, allosterically regulated by ATP and dNTP. The sequence is that of Adenosylcobalamin-dependent ribonucleoside-triphosphate reductase (rtpR) from Lactobacillus leichmannii.